We begin with the raw amino-acid sequence, 87 residues long: NAD(P)H-quinone oxidoreductase subunit O (87 aa).

The span at 1–10 shows a compositional bias: basic and acidic residues; that stretch reads MSEQTGKVDD. The interval 1-26 is disordered; that stretch reads MSEQTGKVDDSQSPPKVQKKLRKGDL.

It belongs to the complex I NdhO subunit family. In terms of assembly, NDH-1 can be composed of about 15 different subunits; different subcomplexes with different compositions have been identified which probably have different functions.

The protein resides in the cellular thylakoid membrane. The enzyme catalyses a plastoquinone + NADH + (n+1) H(+)(in) = a plastoquinol + NAD(+) + n H(+)(out). It carries out the reaction a plastoquinone + NADPH + (n+1) H(+)(in) = a plastoquinol + NADP(+) + n H(+)(out). Functionally, NDH-1 shuttles electrons from an unknown electron donor, via FMN and iron-sulfur (Fe-S) centers, to quinones in the respiratory and/or the photosynthetic chain. The immediate electron acceptor for the enzyme in this species is believed to be plastoquinone. Couples the redox reaction to proton translocation, and thus conserves the redox energy in a proton gradient. Cyanobacterial NDH-1 also plays a role in inorganic carbon-concentration. The chain is NAD(P)H-quinone oxidoreductase subunit O from Prochlorococcus marinus (strain NATL1A).